A 1163-amino-acid polypeptide reads, in one-letter code: Hamartin (1163 aa).

A Glycyl lysine isopeptide (Lys-Gly) (interchain with G-Cter in ubiquitin) cross-link involves residue Lys30. The segment covering 295–316 has biased composition (polar residues); it reads SSYVDTQNSYGGATSTPSSTSR. Disordered regions lie at residues 295–337 and 353–594; these read SSYV…STRP and CGMT…QRGV. A compositionally biased stretch (low complexity) spans 321–337; that stretch reads STPGQLPQSLSSLSTRP. A compositionally biased stretch (pro residues) spans 393–402; it reads TSPPPAPPCP. Residues 403–787 form a mediates interaction with WDR45B region; that stretch reads QDDCAHGPAS…QIRQLQHDRE (385 aa). Residues 474 to 487 are compositionally biased toward basic and acidic residues; the sequence is EKDKEEAAISKELS. Phosphoserine is present on residues Ser487, Ser505, Ser511, Ser521, Ser595, and Ser598. Polar residues predominate over residues 512–530; that stretch reads LSGSQRKTHSAASGTQGFS. Coiled coils occupy residues 721-919 and 970-994; these read RKVI…LAKK and EKDGRLQKLEEDRAEAAEAAEERLD. Positions 1008 to 1020 are enriched in basic and acidic residues; it reads NEEAAGHNGETRT. The interval 1008-1163 is disordered; the sequence is NEEAAGHNGE…DYNETHHEHS (156 aa). A compositionally biased stretch (low complexity) spans 1029-1046; it reads SCGGRVTGGSSSSSSELS. Residues 1066–1083 are compositionally biased toward polar residues; the sequence is EPSSSIPTTVGSLPSSKS. The segment covering 1088 to 1099 has biased composition (basic and acidic residues); sequence KTRELFRNKSES. Ser1097 is subject to Phosphoserine. Low complexity predominate over residues 1131–1146; that stretch reads PPSLDAPHPSSPSSDS. Basic and acidic residues predominate over residues 1154–1163; that stretch reads DYNETHHEHS.

In terms of assembly, component of the TSC-TBC complex (also named Rhebulator complex), composed of 2 molecules of TSC1, 2 molecules of TSC2 and 1 molecule of TBC1D7. Probably forms a complex composed of chaperones HSP90 and HSP70, co-chaperones STIP1/HOP, CDC37, PPP5C, PTGES3/p23, TSC1 and client protein TSC2. Forms a complex composed of chaperones HSP90 and HSP70, co-chaperones CDC37, PPP5C, TSC1 and client protein TSC2, CDK4, AKT, RAF1 and NR3C1; this complex does not contain co-chaperones STIP1/HOP and PTGES3/p23. Forms a complex containing HSP90AA1, TSC1 and TSC2; TSC1 is required to recruit TCS2 to the complex. Interacts (via C-terminus) with the closed form of HSP90AA1 (via the middle domain and TPR repeat-binding motif). Interacts with DOCK7. Interacts with FBXW5. Interacts with WDR45B. Interacts with RPAP3 and URI1. Phosphorylation at Ser-505 does not affect interaction with TSC2. Post-translationally, 'Lys-63'-linked ubiquitinated at Lys-30 by PELI1; the ubiquitination promotes TSC1/TSC2 complex stability. Highly expressed in brain, spleen and kidney, followed by liver and heart.

Its subcellular location is the lysosome membrane. The protein localises to the cytoplasm. The protein resides in the cytosol. Its function is as follows. Non-catalytic component of the TSC-TBC complex, a multiprotein complex that acts as a negative regulator of the canonical mTORC1 complex, an evolutionarily conserved central nutrient sensor that stimulates anabolic reactions and macromolecule biosynthesis to promote cellular biomass generation and growth. The TSC-TBC complex acts as a GTPase-activating protein (GAP) for the small GTPase RHEB, a direct activator of the protein kinase activity of mTORC1. In absence of nutrients, the TSC-TBC complex inhibits mTORC1, thereby preventing phosphorylation of ribosomal protein S6 kinase (RPS6KB1 and RPS6KB2) and EIF4EBP1 (4E-BP1) by the mTORC1 signaling. The TSC-TBC complex is inactivated in response to nutrients, relieving inhibition of mTORC1. Within the TSC-TBC complex, TSC1 stabilizes TSC2 and prevents TSC2 self-aggregation. Involved in microtubule-mediated protein transport via its ability to regulate mTORC1 signaling. Also acts as a co-chaperone for HSP90AA1 facilitating HSP90AA1 chaperoning of protein clients such as kinases, TSC2 and glucocorticoid receptor NR3C1. Increases ATP binding to HSP90AA1 and inhibits HSP90AA1 ATPase activity. Competes with the activating co-chaperone AHSA1 for binding to HSP90AA1, thereby providing a reciprocal regulatory mechanism for chaperoning of client proteins. Recruits TSC2 to HSP90AA1 and stabilizes TSC2 by preventing the interaction between TSC2 and ubiquitin ligase HERC1. The chain is Hamartin from Rattus norvegicus (Rat).